We begin with the raw amino-acid sequence, 156 residues long: Endogenous retrovirus group K member 10 Pro protein (156 aa).

One can recognise a Peptidase A2 domain in the interval 21 to 96 (FEGLVDTGAD…IPLNLWGRDL (76 aa)). Asp26 is an active-site residue. The G-patch domain occupies 111–156 (YSPTSQKIMTKMGYIPGKGLGKNEDGIKVPVEAKINQEREGIGYPF).

It belongs to the peptidase A2 family. HERV class-II K(HML-2) subfamily. In terms of assembly, active as a homodimer. Autoproteolytically processed at the N-terminus. Expected C-terminal autoprocessing not detected. The sequence shown is that of the processed Pro protein.

It catalyses the reaction Processing at the authentic HIV-1 PR recognition site and release of the mature p17 matrix and the p24 capsid protein, as a result of the cleavage of the -SQNY-|-PIVQ- cleavage site.. Its activity is regulated as follows. Resistant to a number of clinically useful HIV-1 PR inhibitors. Inhibited by cyclic urea SD146. Functionally, retroviral proteases have roles in processing of the primary translation products and the maturation of the viral particle. Endogenous Pro proteins may have kept, lost or modified their original function during evolution. This endogenous protein has retained most of the characteristics of retroviral proteases. The polypeptide is Endogenous retrovirus group K member 10 Pro protein (ERVK-10) (Homo sapiens (Human)).